Consider the following 272-residue polypeptide: Merozoite surface protein 2 (272 aa).

The signal sequence occupies residues 1–20 (MKVIKTLSIINFFIFVTFNI). N-linked (GlcNAc...) asparagine glycosylation is found at N22 and N36. The polymorphic region stretch occupies residues 44–198 (AESKPSTGAG…EQTESPELQS (155 aa)). The interval 45–233 (ESKPSTGAGG…DSQKECTDGN (189 aa)) is disordered. Residues 51-82 (GAGGSAGGSAGGSAGGSAGGSAGGSAGSGDGN) are compositionally biased toward gly residues. 6 repeat units span residues 53–56 (GGSA), 57–60 (GGSA), 61–64 (GGSA), 65–68 (GGSA), 69–72 (GGSA), and 73–76 (GGSA). The 6 X 4 AA tandem repeats of G-G-S-A stretch occupies residues 53 to 76 (GGSAGGSAGGSAGGSAGGSAGGSA). Low complexity predominate over residues 83 to 119 (GADAEGSSSTPATTTTTKTTTTTTTTNDAEASTSTSS). The segment covering 122-137 (PNHKNAETNPKGKGEV) has biased composition (basic and acidic residues). Polar residues-rich tracts occupy residues 139 to 165 (EPNQ…NVPP) and 172 to 200 (KSPT…QSAP). N149 is a glycosylation site (N-linked (GlcNAc...) asparagine). N-linked (GlcNAc...) asparagine glycosylation occurs at N221. Residues C229 and C237 are joined by a disulfide bond. N245 and N246 each carry an N-linked (GlcNAc...) asparagine glycan. The GPI-anchor amidated asparagine moiety is linked to residue N246. Residues 247 to 272 (SSNIASINKFVVLISATLVLSFAIFI) constitute a propeptide, removed in mature form.

The protein localises to the cell membrane. Functionally, may play a role in the merozoite attachment to the erythrocyte. This Plasmodium falciparum (isolate 3D7) protein is Merozoite surface protein 2.